The sequence spans 122 residues: Large ribosomal subunit protein uL14 (122 aa).

Belongs to the universal ribosomal protein uL14 family. As to quaternary structure, part of the 50S ribosomal subunit. Forms a cluster with proteins L3 and L19. In the 70S ribosome, L14 and L19 interact and together make contacts with the 16S rRNA in bridges B5 and B8.

Its function is as follows. Binds to 23S rRNA. Forms part of two intersubunit bridges in the 70S ribosome. This is Large ribosomal subunit protein uL14 from Rhizobium johnstonii (strain DSM 114642 / LMG 32736 / 3841) (Rhizobium leguminosarum bv. viciae).